Consider the following 348-residue polypeptide: Holliday junction branch migration complex subunit RuvB (348 aa).

Residues 1 to 182 (MRIELLNTPA…FGINSRFDYY (182 aa)) are large ATPase domain (RuvB-L). Residues isoleucine 21, arginine 22, glycine 63, lysine 66, threonine 67, threonine 68, 129-131 (EDF), arginine 172, tyrosine 182, and arginine 219 each bind ATP. Threonine 67 provides a ligand contact to Mg(2+). The segment at 183–253 (SADLLEKIII…IAMTTLDCLE (71 aa)) is small ATPAse domain (RuvB-S). Residues 256–348 (EEGLDDMDKK…EFPLEDDQRQ (93 aa)) form a head domain (RuvB-H) region. 2 residues coordinate DNA: arginine 311 and arginine 316.

The protein belongs to the RuvB family. Homohexamer. Forms an RuvA(8)-RuvB(12)-Holliday junction (HJ) complex. HJ DNA is sandwiched between 2 RuvA tetramers; dsDNA enters through RuvA and exits via RuvB. An RuvB hexamer assembles on each DNA strand where it exits the tetramer. Each RuvB hexamer is contacted by two RuvA subunits (via domain III) on 2 adjacent RuvB subunits; this complex drives branch migration. In the full resolvosome a probable DNA-RuvA(4)-RuvB(12)-RuvC(2) complex forms which resolves the HJ.

The protein localises to the cytoplasm. It catalyses the reaction ATP + H2O = ADP + phosphate + H(+). The RuvA-RuvB-RuvC complex processes Holliday junction (HJ) DNA during genetic recombination and DNA repair, while the RuvA-RuvB complex plays an important role in the rescue of blocked DNA replication forks via replication fork reversal (RFR). RuvA specifically binds to HJ cruciform DNA, conferring on it an open structure. The RuvB hexamer acts as an ATP-dependent pump, pulling dsDNA into and through the RuvAB complex. RuvB forms 2 homohexamers on either side of HJ DNA bound by 1 or 2 RuvA tetramers; 4 subunits per hexamer contact DNA at a time. Coordinated motions by a converter formed by DNA-disengaged RuvB subunits stimulates ATP hydrolysis and nucleotide exchange. Immobilization of the converter enables RuvB to convert the ATP-contained energy into a lever motion, pulling 2 nucleotides of DNA out of the RuvA tetramer per ATP hydrolyzed, thus driving DNA branch migration. The RuvB motors rotate together with the DNA substrate, which together with the progressing nucleotide cycle form the mechanistic basis for DNA recombination by continuous HJ branch migration. Branch migration allows RuvC to scan DNA until it finds its consensus sequence, where it cleaves and resolves cruciform DNA. This Chlorobium limicola (strain DSM 245 / NBRC 103803 / 6330) protein is Holliday junction branch migration complex subunit RuvB.